A 345-amino-acid chain; its full sequence is Platelet-derived growth factor C (345 aa).

Positions 1–22 (MLLFGFLLLTFALVSQRQGAEA) are cleaved as a signal peptide. Asparagine 25 and asparagine 55 each carry an N-linked (GlcNAc...) asparagine glycan. Residues 46-163 (HEKIITVSAN…PGFCIHYTLL (118 aa)) form the CUB domain. 4 cysteine pairs are disulfide-bonded: cysteine 104/cysteine 124, cysteine 250/cysteine 294, cysteine 280/cysteine 335, and cysteine 287/cysteine 337.

The protein belongs to the PDGF/VEGF growth factor family. In terms of assembly, homodimer; disulfide-linked. Interacts with PDGFRA homodimers, and with heterodimers formed by PDGFRA and PDGFRB. Proteolytic removal of the N-terminal CUB domain releasing the core domain is necessary for unmasking the receptor-binding epitopes of the core domain. Cleavage after basic residues in the hinge region (region connecting the CUB and growth factor domains) gives rise to the receptor-binding form.

Its subcellular location is the secreted. Its function is as follows. Growth factor that plays an essential role in the regulation of embryonic development, cell proliferation, cell migration, survival and chemotaxis. Potent mitogen and chemoattractant for cells of mesenchymal origin. Required for normal skeleton formation during embryonic development. Required for normal skin morphogenesis during embryonic development. Plays an important role in wound healing, in angiogenesis and blood vessel development. This Gekko japonicus (Schlegel's Japanese gecko) protein is Platelet-derived growth factor C (PDGFC).